A 231-amino-acid chain; its full sequence is tRNA (guanine-N(1)-)-methyltransferase (231 aa).

Residues Gly-114 and Ile-134–Leu-139 each bind S-adenosyl-L-methionine.

It belongs to the RNA methyltransferase TrmD family. In terms of assembly, homodimer.

The protein localises to the cytoplasm. It catalyses the reaction guanosine(37) in tRNA + S-adenosyl-L-methionine = N(1)-methylguanosine(37) in tRNA + S-adenosyl-L-homocysteine + H(+). Specifically methylates guanosine-37 in various tRNAs. This chain is tRNA (guanine-N(1)-)-methyltransferase, found in Clostridioides difficile (strain 630) (Peptoclostridium difficile).